Here is a 388-residue protein sequence, read N- to C-terminus: D-xylose dehydrogenase (388 aa).

The protein belongs to the Gfo/Idh/MocA family. In terms of assembly, homotetramer. The cofactor is Zn(2+).

It carries out the reaction D-xylose + NADP(+) = D-xylono-1,5-lactone + NADPH + H(+). The enzyme catalyses D-xylose + NAD(+) = D-xylono-1,5-lactone + NADH + H(+). It functions in the pathway carbohydrate metabolism; D-xylose degradation. In terms of biological role, catalyzes the NADP(+)-dependent oxidation of D-xylose. Is able to use both NADP(+) and NAD(+); however, the enzyme shows a very strong preference for NADP(+). Is likely involved in the first step of the oxidative D-xylose degradation pathway. In Paenarthrobacter nicotinovorans (Arthrobacter nicotinovorans), this protein is D-xylose dehydrogenase (xdh).